We begin with the raw amino-acid sequence, 721 residues long: Penicillin-binding protein activator LpoA (721 aa).

An N-terminal signal peptide occupies residues 1–26 (MVPLTFLRTKASRSLPIMLAALIFAG). Cysteine 27 carries the N-palmitoyl cysteine lipid modification. Cysteine 27 is lipidated: S-diacylglycerol cysteine. The span at 316–330 (TSDLTSAQAPAQGTM) shows a compositional bias: polar residues. Residues 316 to 393 (TSDLTSAQAP…PAAQPQAVAA (78 aa)) form a disordered region. The span at 331–393 (QNPVTAPTTP…PAAQPQAVAA (63 aa)) shows a compositional bias: low complexity.

The protein belongs to the LpoA family. In terms of assembly, interacts with PBP1a.

Its subcellular location is the cell outer membrane. Functionally, regulator of peptidoglycan synthesis that is essential for the function of penicillin-binding protein 1A (PBP1a). The protein is Penicillin-binding protein activator LpoA of Enterobacter sp. (strain 638).